The sequence spans 710 residues: MSKQTFTTTFAGKPLVVEVGQVAKQANGATVVRYGESTVLTAAVMSKKMATGDFFPLQVNYEEKMYAAGKFPGGFMKREGRPSTDATLTARLIDRPIRPMFAEGFRNEVQVINTVLSYDENASAPMAAMFGSSLALSISDIPFNGPIAGVQVGYIDGEFIINPDKEQMEASLLELTVAGSKEAINMVESGAKELSEDIMLEALLKGHQAIQELIAFQEQIVAVVGKEKAEVELLQVDADLQADIVAKYNAQLQKAVQVEEKKAREAATEAVKEMVKAEYEERYAEDENLATIMRDVAEILEQMEHAEVRRLITEDKIRPDGRKIDEIRPLDAVVDFLPKVHGSGLFTRGQTQALSILTLAPMGETQIIDGLAPEYKKRFLHHYNFPQYSVGETGRYGAAGRREIGHGALGERALEQVLPSLEEFPYAIRLVAEVLESNGSSSQASICAGTLALMAGGVPIKAPVAGIAMGLISDGTNYTVLTDIQGLEDHFGDMDFKVAGTREGITALQMDIKIAGITPQILEEALAQAKKARFEILDVIEATIAEPRPELAPTAPKIDTIKIDVDKIKVVIGKGGETIDKIIAETGVKIDIDDEGNVSIYSSDQAAINRTKEIIAGLVREAKVGEVYHAKVVRIEKFGAFVNLFDKTDALVHISEIAWTRTTNVSDVLEVGEDVDVKVIKIDEKGRVDASMKALIPRPPKPEKKEEKHD.

2 residues coordinate Mg(2+): aspartate 489 and aspartate 495. The KH domain maps to 556 to 615; the sequence is PKIDTIKIDVDKIKVVIGKGGETIDKIIAETGVKIDIDDEGNVSIYSSDQAAINRTKEII. Residues 625 to 693 form the S1 motif domain; it reads GEVYHAKVVR…EKGRVDASMK (69 aa). A disordered region spans residues 691–710; it reads SMKALIPRPPKPEKKEEKHD. Basic and acidic residues predominate over residues 700–710; it reads PKPEKKEEKHD.

This sequence belongs to the polyribonucleotide nucleotidyltransferase family. The cofactor is Mg(2+).

The protein localises to the cytoplasm. It carries out the reaction RNA(n+1) + phosphate = RNA(n) + a ribonucleoside 5'-diphosphate. In terms of biological role, involved in mRNA degradation. Catalyzes the phosphorolysis of single-stranded polyribonucleotides processively in the 3'- to 5'-direction. This chain is Polyribonucleotide nucleotidyltransferase, found in Streptococcus pyogenes serotype M2 (strain MGAS10270).